Consider the following 951-residue polypeptide: Protein translocase subunit SecA 1 (951 aa).

ATP contacts are provided by residues glutamine 87, 105 to 109 (GEGKT), and aspartate 525. The tract at residues 911-942 (PVVSADRSSRDPGNPASWGKVGRNEDCPCGSG) is disordered. The Zn(2+) site is built by cysteine 937, cysteine 939, cysteine 948, and histidine 949.

It belongs to the SecA family. In terms of assembly, monomer and homodimer. Part of the essential Sec protein translocation apparatus which comprises SecA, SecYEG and auxiliary proteins SecDF-YajC and YidC. Zn(2+) is required as a cofactor.

It localises to the cell inner membrane. It is found in the cytoplasm. The catalysed reaction is ATP + H2O + cellular proteinSide 1 = ADP + phosphate + cellular proteinSide 2.. Its function is as follows. Part of the Sec protein translocase complex. Interacts with the SecYEG preprotein conducting channel. Has a central role in coupling the hydrolysis of ATP to the transfer of proteins into and across the cell membrane, serving both as a receptor for the preprotein-SecB complex and as an ATP-driven molecular motor driving the stepwise translocation of polypeptide chains across the membrane. In Nitrobacter hamburgensis (strain DSM 10229 / NCIMB 13809 / X14), this protein is Protein translocase subunit SecA 1.